A 683-amino-acid chain; its full sequence is Outer dynein arm-docking complex subunit 4 (683 aa).

4 TPR repeats span residues 13-46, 47-80, 48-80, and 81-114; these read FPSY…QSGD, KNCL…DPTF, NCLV…DPTF, and CKGI…RPDR. Residues 158–179 form a disordered region; that stretch reads QQKPHPVRQLIHHPKRESKRKG. The segment covering 167 to 179 has biased composition (basic residues); the sequence is LIHHPKRESKRKG. 5 TPR repeats span residues 275 to 311, 320 to 353, 360 to 393, 397 to 430, and 437 to 470; these read LKSL…NKEE, GNLY…AKEY, SRAL…AKTT, TWLF…AEEE, and LNAS…AKLV. 2 disordered regions span residues 510–537 and 553–683; these read ENAT…PEKV and VLSK…EPIE. Composition is skewed to basic and acidic residues over residues 521–537, 566–590, 602–620, and 629–675; these read TAKE…PEKV, PEQR…ERGP, GRTE…RPSE, and SSPR…IEKD. The stretch at 592 to 625 is one TPR 15 repeat; it reads DTAKGQFGEAGRTEQNREETREIYRRPSELDQNL.

As to quaternary structure, component of the outer dynein arm-docking complex along with ODAD1, ODAD2 and ODAD3. Interacts with ODAD1; this interaction may facilitate the recruitment and/or attachment of outer dynein arm docking complex proteins, including ODAD1, ODAD3 and ODAD2, to ciliary axonemes. Interacts with components of the IFT complex A, including IFT140, TTC21B/IFT139 and WDR19/IFT144, and the IFT complex B, including IFT46, IFT52 and IFT57. Interacts with CFAP53. As to expression, expressed in trachea multiciliated cells.

It is found in the cytoplasm. The protein localises to the cytoskeleton. It localises to the cilium axoneme. Functionally, component of the outer dynein arm-docking complex (ODA-DC) that mediates outer dynein arms (ODA) binding onto the doublet microtubule. Plays an essential role for the assembly of ODA-DC and for the docking of ODA in ciliary axoneme. The chain is Outer dynein arm-docking complex subunit 4 from Bos taurus (Bovine).